The primary structure comprises 865 residues: Nitrogen regulatory protein nrfA (865 aa).

Disordered regions lie at residues 1-75, 115-140, 177-227, 557-605, and 617-663; these read MEGI…DEMQ, RKER…PSGI, FDSP…QDQR, GSTD…RTAS, and LNGS…AGPT. Residues 32-46 show a composition bias toward low complexity; sequence DDFTFDSPFSSSGSS. 2 stretches are compositionally biased toward basic and acidic residues: residues 115-126 and 180-189; these read RKEREQQEREQQ and PAEHPSHPSA. A compositionally biased stretch (polar residues) spans 582-592; that stretch reads ASVSDVRNQNQ. The segment at 665 to 689 adopts a GATA-type zinc-finger fold; the sequence is CTNCFTQTTPLWRRNPEGQPLCNAC. Positions 713–854 are disordered; the sequence is NRSSANTLAV…NHSIAGGQGA (142 aa). Polar residues-rich tracts occupy residues 715-724 and 737-764; these read SSANTLAVGT and IQHA…SNTL. Composition is skewed to low complexity over residues 771–786 and 830–844; these read PIAA…AGVA and PLAP…ANPA.

The protein localises to the nucleus. Its function is as follows. Major nitrogen regulatory protein. This is Nitrogen regulatory protein nrfA (nrfA) from Penicillium urticae.